The following is a 115-amino-acid chain: Large ribosomal subunit protein uL23 (115 aa).

It belongs to the universal ribosomal protein uL23 family. As to quaternary structure, part of the 50S ribosomal subunit. Contacts protein L29, and trigger factor when it is bound to the ribosome.

Functionally, one of the early assembly proteins it binds 23S rRNA. One of the proteins that surrounds the polypeptide exit tunnel on the outside of the ribosome. Forms the main docking site for trigger factor binding to the ribosome. In Granulibacter bethesdensis (strain ATCC BAA-1260 / CGDNIH1), this protein is Large ribosomal subunit protein uL23.